Reading from the N-terminus, the 190-residue chain is Lipid A acyltransferase PagP (190 aa).

Positions 1–29 (MYVAMIIRKYFLIIALLVMPWLAIPSVSA) are cleaved as a signal peptide. Catalysis depends on residues His62, Asp105, and Ser106.

The protein belongs to the lipid A palmitoyltransferase family. In terms of assembly, homodimer.

The protein resides in the cell outer membrane. The enzyme catalyses a lipid A + a 1,2-diacyl-sn-glycero-3-phosphocholine = a hepta-acyl lipid A + a 2-acyl-sn-glycero-3-phosphocholine. It catalyses the reaction a lipid IVA + a 1,2-diacyl-sn-glycero-3-phosphocholine = a lipid IVB + a 2-acyl-sn-glycero-3-phosphocholine. It carries out the reaction a lipid IIA + a 1,2-diacyl-sn-glycero-3-phosphocholine = a lipid IIB + a 2-acyl-sn-glycero-3-phosphocholine. Transfers a fatty acid residue from the sn-1 position of a phospholipid to the N-linked hydroxyfatty acid chain on the proximal unit of lipid A or its precursors. The chain is Lipid A acyltransferase PagP from Salmonella typhi.